A 153-amino-acid polypeptide reads, in one-letter code: 3-hydroxyacyl-[acyl-carrier-protein] dehydratase FabZ (153 aa).

The active site involves histidine 54.

Belongs to the thioester dehydratase family. FabZ subfamily.

The protein localises to the cytoplasm. It carries out the reaction a (3R)-hydroxyacyl-[ACP] = a (2E)-enoyl-[ACP] + H2O. Its function is as follows. Involved in unsaturated fatty acids biosynthesis. Catalyzes the dehydration of short chain beta-hydroxyacyl-ACPs and long chain saturated and unsaturated beta-hydroxyacyl-ACPs. The chain is 3-hydroxyacyl-[acyl-carrier-protein] dehydratase FabZ from Shewanella sediminis (strain HAW-EB3).